The chain runs to 426 residues: Enolase (426 aa).

Residue Gln-163 coordinates (2R)-2-phosphoglycerate. Glu-205 acts as the Proton donor in catalysis. Residues Asp-242, Glu-286, and Asp-313 each contribute to the Mg(2+) site. Residues Lys-338, Arg-367, Ser-368, and Lys-389 each contribute to the (2R)-2-phosphoglycerate site. Catalysis depends on Lys-338, which acts as the Proton acceptor.

It belongs to the enolase family. The cofactor is Mg(2+).

It localises to the cytoplasm. Its subcellular location is the secreted. It is found in the cell surface. It carries out the reaction (2R)-2-phosphoglycerate = phosphoenolpyruvate + H2O. It participates in carbohydrate degradation; glycolysis; pyruvate from D-glyceraldehyde 3-phosphate: step 4/5. Catalyzes the reversible conversion of 2-phosphoglycerate (2-PG) into phosphoenolpyruvate (PEP). It is essential for the degradation of carbohydrates via glycolysis. The polypeptide is Enolase (Helicobacter pylori (strain HPAG1)).